We begin with the raw amino-acid sequence, 79 residues long: Calcium/calmodulin-dependent protein kinase II inhibitor 2 (79 aa).

The segment at 43-69 (KRPPKLGQIGRAKRVVIEDDRIDEVLK) is inhibitory domain.

The protein belongs to the CAMK2N family.

The protein resides in the nucleus. The protein localises to the cytoplasm. It is found in the cytosol. Potent and specific cellular inhibitor of CaM-kinase II (CAMK2). Traps Ca(2+)/calmodulin on CAMK2. This chain is Calcium/calmodulin-dependent protein kinase II inhibitor 2 (camk2n2), found in Xenopus tropicalis (Western clawed frog).